We begin with the raw amino-acid sequence, 219 residues long: Leukocyte surface antigen CD53 (219 aa).

The Cytoplasmic portion of the chain corresponds to 1-11; it reads MGMSSLKLLKF. The chain crosses the membrane as a helical span at residues 12 to 32; that stretch reads VLFFFNLIFWFCGCCILGLGI. Over 33–54 the chain is Extracellular; the sequence is YLLIHSKFGVLFHNLPSLTLGN. A helical membrane pass occupies residues 55-69; the sequence is VLVIVGSVIMVVAFL. The Cytoplasmic segment spans residues 70–80; it reads GCMGSIKENKC. The helical transmembrane segment at 81 to 106 threads the bilayer; sequence LLMSFFVLLLIILLAEVTLAILLFVY. Residues 107 to 181 lie on the Extracellular side of the membrane; it reads EQKLKEYVAE…IQAKQWFHSN (75 aa). 2 N-linked (GlcNAc...) asparagine glycosylation sites follow: Asn-129 and Asn-148. A helical membrane pass occupies residues 182-206; sequence FLYIGITTICVCVIQVLGMSFALTL. Residues 207–219 lie on the Cytoplasmic side of the membrane; the sequence is NCQIDKTSQVLGL.

The protein belongs to the tetraspanin (TM4SF) family. In terms of assembly, interacts with SCIMP. Interacts with CD45/PTPRC. Interacts with IL7R. Interacts with RBL2 and PPP2CA.

Its subcellular location is the cell membrane. The protein resides in the cell junction. It is found in the membrane. It localises to the synapse. Structural component of specialized membrane microdomains known as tetraspanin-enriched microdomains (TERMs), which act as platforms for receptor clustering and signaling. Participates thereby in diverse biological functions such as cell signal transduction, adhesion, migration and protein trafficking. Plays a role in the activation of monocytes and B-cells. Acts as an essential regulator of B-cell development by promoting interleukin-7 receptor/IL7R signaling. Also promotes, in B-cells, the BCR signaling by recruiting PKC to the plasma membrane in order to phosphorylate its substrates. Plays an essential role in B- and T-cells homing to lymph nodes by stabilizing L-selectin/SELL cell surface expression. Also mediates metabolic and inflammatory functions in hepatocytes and adipose tissue by promoting TNF-alpha and LPS signaling independent of the immune compartment. This Bos taurus (Bovine) protein is Leukocyte surface antigen CD53 (CD53).